Reading from the N-terminus, the 266-residue chain is Thymidylate synthase (266 aa).

A dUMP-binding site is contributed by R24. H54 contacts (6R)-5,10-methylene-5,6,7,8-tetrahydrofolate. Residue 129 to 130 coordinates dUMP; sequence RR. Catalysis depends on C149, which acts as the Nucleophile. DUMP is bound by residues 169-172, N180, and 210-212; these read RSAD and HIY. Position 172 (D172) interacts with (6R)-5,10-methylene-5,6,7,8-tetrahydrofolate. Position 265 (A265) interacts with (6R)-5,10-methylene-5,6,7,8-tetrahydrofolate.

Belongs to the thymidylate synthase family. Bacterial-type ThyA subfamily. In terms of assembly, homodimer.

It is found in the cytoplasm. The enzyme catalyses dUMP + (6R)-5,10-methylene-5,6,7,8-tetrahydrofolate = 7,8-dihydrofolate + dTMP. Its pathway is pyrimidine metabolism; dTTP biosynthesis. In terms of biological role, catalyzes the reductive methylation of 2'-deoxyuridine-5'-monophosphate (dUMP) to 2'-deoxythymidine-5'-monophosphate (dTMP) while utilizing 5,10-methylenetetrahydrofolate (mTHF) as the methyl donor and reductant in the reaction, yielding dihydrofolate (DHF) as a by-product. This enzymatic reaction provides an intracellular de novo source of dTMP, an essential precursor for DNA biosynthesis. This chain is Thymidylate synthase, found in Corynebacterium glutamicum (strain R).